We begin with the raw amino-acid sequence, 164 residues long: Transcriptional repressor NrdR (164 aa).

A zinc finger spans residues 3–34 (CPFCRHDDTQVVDSRVSEDGAAIRRRRRCPAC). An ATP-cone domain is found at 49–139 (PSVVKKDGSR…VYRRFEDVSE (91 aa)).

This sequence belongs to the NrdR family. Zn(2+) is required as a cofactor.

Negatively regulates transcription of bacterial ribonucleotide reductase nrd genes and operons by binding to NrdR-boxes. This Paraburkholderia phymatum (strain DSM 17167 / CIP 108236 / LMG 21445 / STM815) (Burkholderia phymatum) protein is Transcriptional repressor NrdR.